A 96-amino-acid polypeptide reads, in one-letter code: Small ribosomal subunit protein uS19 (96 aa).

This sequence belongs to the universal ribosomal protein uS19 family.

Protein S19 forms a complex with S13 that binds strongly to the 16S ribosomal RNA. The chain is Small ribosomal subunit protein uS19 from Solibacter usitatus (strain Ellin6076).